A 490-amino-acid chain; its full sequence is Ribosome biogenesis protein YTM1 (490 aa).

Residues 1 to 22 (MDGLEDGPLDASTATSQKPQRQ) form a disordered region. The interval 23–104 (VRLKLTSRHE…ETTLDVEYVR (82 aa)) is ubiquitin-like (UBL) domain. WD repeat units lie at residues 116 to 168 (LHDD…IALS), 175 to 213 (GHTA…DGFS), 224 to 263 (GHKG…NPAA), 298 to 338 (SHTA…LVDT), 340 to 379 (TASH…TTVS), 385 to 425 (GHTN…TDKD), and 449 to 487 (GEGV…PNGG). Residues 255-286 (TRKSENPAAPESLLPSNTSRSSKRRKLNSSVS) are disordered.

This sequence belongs to the WD repeat WDR12/YTM1 family. In terms of assembly, component of the NOP7 complex, composed of ERB1, NOP7 and YTM1. The complex is held together by ERB1, which interacts with NOP7 via its N-terminal domain and with YTM1 via a high-affinity interaction between the seven-bladed beta-propeller domains of the 2 proteins. The NOP7 complex associates with the 66S pre-ribosome. Interacts (via UBL domain) with MDN1 (via VWFA/MIDAS domain).

The protein resides in the nucleus. It localises to the nucleolus. Its subcellular location is the nucleoplasm. In terms of biological role, component of the NOP7 complex, which is required for maturation of the 25S and 5.8S ribosomal RNAs and formation of the 60S ribosome. This chain is Ribosome biogenesis protein YTM1, found in Ajellomyces capsulatus (strain NAm1 / WU24) (Darling's disease fungus).